We begin with the raw amino-acid sequence, 409 residues long: Protein PHOSPHATE STARVATION RESPONSE 1 (409 aa).

Basic and acidic residues predominate over residues 1 to 15 (MEARPVHRSGSRDLT). 3 disordered regions span residues 1-42 (MEAR…NSQL), 86-108 (EKQQ…NNDS), and 178-226 (ETNS…TGKA). 2 stretches are compositionally biased toward polar residues: residues 16–26 (RTSSIPSTQKP) and 90–108 (HYTG…NNDS). Positions 192–224 (QIPQPQIVQQQPSPSVELRPVSTTSSNSNNGTG) are enriched in low complexity. The region spanning 222–282 (GTGKARMRWT…HLQKYRTARY (61 aa)) is the HTH myb-type domain. A DNA-binding region (H-T-H motif) is located at residues 253–278 (PKGVLKIMKVEGLTIYHVKSHLQKYR). Residues 314-334 (TEALRLQMEVQKQLHEQLEIQ) are a coiled coil. An LHEQLE motif is present at residues 327 to 332 (LHEQLE). Residues 358–370 (GLTKGTASTSDSA) show a composition bias toward polar residues. The tract at residues 358–409 (GLTKGTASTSDSAAKSEQEDKKTADSKEVPEEETRKCEELESPQPKRPKIDN) is disordered. Residues 371–396 (AKSEQEDKKTADSKEVPEEETRKCEE) are compositionally biased toward basic and acidic residues. S399 is modified (phosphoserine).

It belongs to the MYB-CC family. In terms of assembly, homodimers and heterodimers. Interacts with SPX1 in a Pi-dependent manner. Does not interact with PHL2 or PHL3. Post-translationally, sumoylated by SIZ1. Sumoylation controls phosphate deficiency responses.

The protein localises to the nucleus. Transcription factor involved in phosphate starvation signaling. Binds as a dimer to P1BS, an imperfect palindromic sequence 5'-GNATATNC-3', to promote the expression of inorganic phosphate (Pi) starvation-responsive genes. SPX1 is a competitive inhibitor of this DNA-binding. PHR1 binding to its targets is low Pi-dependent. Regulates the expression of miR399. Regulates the expression of IPS1 (At3g09922), a non-coding RNA that mimics the target of miR399 to block the cleavage of PHO2 under Pi-deficient conditions. Regulates lipid remodeling and triacylglycerol accumulation during phosphorus starvation. Required for the shoot-specific hypoxic response. Regulates FER1 expression upon phosphate starvation, linking iron and phosphate homeostasis. Contributes to the homeostasis of both sulfate and phosphate in plants under phosphate deficiency. Required for adaptation to high light and retaining functional photosynthesis during phosphate starvation. Involved in the coregulation of Zn and Pi homeostasis. The protein is Protein PHOSPHATE STARVATION RESPONSE 1 of Arabidopsis thaliana (Mouse-ear cress).